The sequence spans 361 residues: MGNVLAASSPPAGPPPPPAPALVGLPPPPPSPPGFTLPPLGGSLGAGTSTSRSSERTPGAATASASGAAEDGACGCLPNPGTFEECHRKCKELFPIQMEGVKLTVNKGLSNHFQVNHTVALSTIGESNYHFGVTYVGTKQLSPTEAFPVLVGDMDNSGSLNAQVIHQLGPGLRSKMAIQTQQSKFVNWQVDGEYRGSDFTAAVTLGNPDVLVGSGILVAHYLQSITPCLALGGELVYHRRPGEEGTVMSLAGKYTLNNWLATVTLGQAGMHATYYHKASDQLQVGVEFEASTRMQDTSVSFGYQLDLPKANLLFKGSVDSNWIVGATLEKKLPPLPLTLALGAFLNHRKNKFQCGFGLTIG.

Residues 1–10 (MGNVLAASSP) are compositionally biased toward low complexity. A disordered region spans residues 1 to 71 (MGNVLAASSP…TASASGAAED (71 aa)). Pro residues predominate over residues 11 to 36 (PAGPPPPPAPALVGLPPPPPSPPGFT). Composition is skewed to low complexity over residues 37–52 (LPPL…STSR) and 59–71 (GAAT…AAED).

It belongs to the Tom40 family. As to quaternary structure, forms part of the preprotein translocase complex of the outer mitochondrial membrane (TOM complex) which consists of at least 7 different proteins (TOMM5, TOMM6, TOMM7, TOMM20, TOMM22, TOMM40 and TOMM70). Interacts with mitochondrial targeting sequences. Interacts with TIMM29; linking the TIM22 complex to the TOM complex. Forms a complex with BCAP31 (via C-terminus) which mediates the translocation of components of the mitochondrial membrane respiratory chain NADH dehydrogenase (Complex I) from the cytosol to the mitochondria. Interacts (via N-terminus) with CYP1A1 (via mitochondrial targeting signal); this interaction is required for CYP1A1 translocation across the mitochondrial outer membrane.

The protein resides in the mitochondrion outer membrane. Functionally, channel-forming protein essential for import of protein precursors into mitochondria. Plays a role in the assembly of the mitochondrial membrane respiratory chain NADH dehydrogenase (Complex I) by forming a complex with BCAP31 and mediating the translocation of Complex I components from the cytosol to the mitochondria. This chain is Mitochondrial import receptor subunit TOM40 homolog (TOMM40), found in Homo sapiens (Human).